We begin with the raw amino-acid sequence, 357 residues long: Non-structural protein NS2 (357 aa).

Disordered regions lie at residues 169-191 (PRLQVHSVAPREESRWMDDDEAK) and 229-266 (DERDEGDRDERGDEEQVKTLSDDDDQGEDASDDEHPKT). Basic and acidic residues predominate over residues 233–249 (EGDRDERGDEEQVKTLS). Positions 250–260 (DDDDQGEDASD) are enriched in acidic residues.

The protein belongs to the orbivirus non-structural protein NS2 family.

Single-stranded RNA-binding protein. The polypeptide is Non-structural protein NS2 (Segment-8) (Antilocapra americana (Pronghorn)).